Reading from the N-terminus, the 632-residue chain is Probable potassium transport system protein Kup (632 aa).

The next 12 membrane-spanning stretches (helical) occupy residues 19–39 (LVVG…LYSL), 59–79 (IISM…VMFV), 110–130 (LIMM…VITP), 146–166 (PGLS…LFFI), 178–198 (FGPI…IHLV), 221–241 (LQAF…EALY), 256–276 (WFVL…AMLL), 298–318 (MVLL…SGAF), 346–366 (IYMP…VLAF), 375–395 (AYGI…ALVM), 403–423 (PALV…FFAA), and 428–448 (IAEG…LLMT).

It belongs to the HAK/KUP transporter (TC 2.A.72) family.

It is found in the cell inner membrane. It catalyses the reaction K(+)(in) + H(+)(in) = K(+)(out) + H(+)(out). Transport of potassium into the cell. Likely operates as a K(+):H(+) symporter. The polypeptide is Probable potassium transport system protein Kup (Cupriavidus metallidurans (strain ATCC 43123 / DSM 2839 / NBRC 102507 / CH34) (Ralstonia metallidurans)).